A 708-amino-acid polypeptide reads, in one-letter code: UvrABC system protein B (708 aa).

The region spanning 32-419 is the Helicase ATP-binding domain; the sequence is EGIQSGKTAQ…GGEVVEQIIR (388 aa). Residue 45–52 coordinates ATP; sequence GATGTGKT. The short motif at 98 to 121 is the Beta-hairpin element; that stretch reads YYDYYQPEAYIPQRDVYIEKDSSI. Positions 436 to 598 constitute a Helicase C-terminal domain; sequence QVTHLLEQVR…IVPKTVRKSI (163 aa). The UVR domain maps to 627 to 662; that stretch reads IEYVDKLEQEMLAAAEDLEFERAARLRDRVLQLKEH. The tract at residues 668 to 708 is disordered; sequence SEVEIVDEKSAGKSGGRGRGRRGAKKKGASKGTKIPRPKRG. The segment covering 683–708 has biased composition (basic residues); the sequence is GRGRGRRGAKKKGASKGTKIPRPKRG.

It belongs to the UvrB family. In terms of assembly, forms a heterotetramer with UvrA during the search for lesions. Interacts with UvrC in an incision complex.

It is found in the cytoplasm. Its function is as follows. The UvrABC repair system catalyzes the recognition and processing of DNA lesions. A damage recognition complex composed of 2 UvrA and 2 UvrB subunits scans DNA for abnormalities. Upon binding of the UvrA(2)B(2) complex to a putative damaged site, the DNA wraps around one UvrB monomer. DNA wrap is dependent on ATP binding by UvrB and probably causes local melting of the DNA helix, facilitating insertion of UvrB beta-hairpin between the DNA strands. Then UvrB probes one DNA strand for the presence of a lesion. If a lesion is found the UvrA subunits dissociate and the UvrB-DNA preincision complex is formed. This complex is subsequently bound by UvrC and the second UvrB is released. If no lesion is found, the DNA wraps around the other UvrB subunit that will check the other stand for damage. The chain is UvrABC system protein B from Rhodopirellula baltica (strain DSM 10527 / NCIMB 13988 / SH1).